Reading from the N-terminus, the 983-residue chain is MTSTSARPARRSRAPLAITAAIIAALVIAFFIFAGFYADVLWYDQLGYLGVLLTQWGAGIALFLVGFLAMAIPVFVSIQVAYRSRPVYAKLNSQLDRYQQVVEPLRRLAMFAIPAVFGLFAGVSASSGWQRTLLWLNRTPSGTVDPQFQLDTSFYMFELPFYHAVVGFASAVVIISMLGVLATSYLYGAVRFTGREVRISKSSRIQIAITAGVYFLLQGVSIWLDQYSSVVNNANGGLFTGAAYSDVNAVIPGRAILAGIAGVVALFFIVTAVIGRWRLPIIGTAGLIVASILVGTAYPAIVQRFQVEPNERALESQYYERNIEATRQAYGLADIEEIPYDATTDTTPGALREDAATTANIRILDPAVVGDAFSQLQQFRQYYQFGDNLDVDRYQIDGRVQDTVVAVRELSPTNTGTSWVNQHLVYTHGYSLVAAYGTQRTSDGQPVFLESGIPASGDLGDFEPRVYFGENSPDYSIVGGPESGDKVELDYPSGVDGADETYTTFQGDGGPKVDNVFKRLIYALKFQSEQIFLANQINDQSQIIYDRDPAERVGKVAPYLTIDKDPYPSVVDGRVVWIVDGYTTSDQYPYSQRQDMSRLIADSQQTQPLVPTDQINYIRNSVKATVDAYDGKVTLYAWDTDDPILKTWQKVFPSTLKPISDISGELMSHLRFPADMFKVQRAVLGKYHVTDPGSIYSNQDLWTTPNDPTATTEAGTPASLQPPYYLTMQMPGQDAPRFSLYSTFIPPATQDTSRSVLTGYLGVDSDAGSTAGEKAADYGKLRLLTLPNDDTIPAPTQIQNNFNSDTNVANQLNLLERGGRTSVVRGNLLTLPVGGGLLYVQPVYVRSTGDTSYPLLRKVLVAFGDKIAFEDTLDAALDSIFEGDSGATAGDEDVVPTTPVDGGTGDGATDGATDGGTGSTPTPAPTTSPSAPAQDVQAALDAANTALQERQAAYASGDLVAAAQADQRFTEAVQRAYELSQQQ.

Transmembrane regions (helical) follow at residues 16 to 36 (LAIT…FAGF), 56 to 76 (WGAG…PVFV), 108 to 128 (LAMF…ASSG), 161 to 181 (FYHA…LGVL), 205 to 225 (IQIA…IWLD), 255 to 275 (AILA…AVIG), and 281 to 301 (IIGT…YPAI). Polar residues predominate over residues 699 to 714 (QDLWTTPNDPTATTEA). Disordered regions lie at residues 699–718 (QDLW…GTPA) and 884–936 (DSGA…AQDV). Over residues 902–918 (GGTGDGATDGATDGGTG) the composition is skewed to gly residues. Residues 919-933 (STPTPAPTTSPSAPA) show a composition bias toward low complexity.

This sequence belongs to the UPF0182 family.

The protein resides in the cell membrane. The chain is UPF0182 protein CMM_1204 from Clavibacter michiganensis subsp. michiganensis (strain NCPPB 382).